An 87-amino-acid polypeptide reads, in one-letter code: Small ribosomal subunit protein bS20 (87 aa).

Positions 1–22 are disordered; sequence MANSAQARKRARQSLKARAHNA. Over residues 7-19 the composition is skewed to basic residues; it reads ARKRARQSLKARA.

The protein belongs to the bacterial ribosomal protein bS20 family.

Its function is as follows. Binds directly to 16S ribosomal RNA. The protein is Small ribosomal subunit protein bS20 of Laribacter hongkongensis (strain HLHK9).